The chain runs to 283 residues: MELERIVSAALLAFVQTHLPEADLSGLDDVIFSYVLGVLGDLGPSGPSEENFDMEAFTEMMEAYVPGFAHIPRGTIGDMIQKLSGQLSGARNKENVQPQSSEVQGQVSISPEPLQRPEKLKEETMSSAGDTQDEAAGPEEELLPGVDVLLEVFPTCSVEQAQWVLAKARGDLEEAVQMLVEGKQGPPAWDGPNQDLPRRLRGPQKDELKSFILQKYMMVDSAEDQKIHRPMAPKEAPKKLIRYIDNQIVSTKGERFKDVRNPEAEEMKATYINLKPARKYRFH.

The segment covering 87 to 109 (LSGARNKENVQPQSSEVQGQVSI) has biased composition (polar residues). Residues 87–139 (LSGARNKENVQPQSSEVQGQVSISPEPLQRPEKLKEETMSSAGDTQDEAAGPE) form a disordered region. Phosphoserine is present on serine 110. Over residues 115-124 (QRPEKLKEET) the composition is skewed to basic and acidic residues. The 44-residue stretch at 141 to 184 (ELLPGVDVLLEVFPTCSVEQAQWVLAKARGDLEEAVQMLVEGKQ) folds into the CUE domain.

Belongs to the CUEDC2 family. In terms of assembly, interacts with PGR and ESR1.

It is found in the cytoplasm. Its subcellular location is the nucleus. Functionally, controls PGR and ESR1 protein levels through their targeting for ubiquitination and subsequent proteasomal degradation. This chain is CUE domain-containing protein 2 (CUEDC2), found in Bos taurus (Bovine).